Here is a 1098-residue protein sequence, read N- to C-terminus: Ubiquitin carboxyl-terminal hydrolase 36 (1098 aa).

Residues 72-86 (RHRSGDELQARKPGT) are compositionally biased toward basic and acidic residues. Positions 72–97 (RHRSGDELQARKPGTERVSGSGGDGV) are disordered. Residues 122–423 (AGLHNLGNTC…QAYVLFYLRI (302 aa)) form the USP domain. C131 acts as the Nucleophile in catalysis. Catalysis depends on H382, which acts as the Proton acceptor. Disordered stretches follow at residues 428–464 (KSPE…VPSP) and 483–574 (EVGV…RDTI). 4 positions are modified to phosphoserine: S429, S463, S547, and S578. Positions 540-558 (PLQSLTTSPTTSQGSPGTG) are enriched in low complexity. Residues 589-640 (GHRLKGEGSGVDLEKGDSSSSSPEHSASSDPAKAPQTAESRAAHACDSQGTN) form a disordered region. Residues 606–617 (SSSSSPEHSASS) show a composition bias toward low complexity. S663 carries the phosphoserine modification. Disordered stretches follow at residues 664–710 (PALS…SPSA) and 722–973 (HPVV…ALSV). Over residues 665–677 (ALSSTTTEPTSLM) the composition is skewed to polar residues. S678 is subject to Phosphoserine. Residues 683-692 (KKLALSAKKA) show a composition bias toward low complexity. Phosphoserine is present on S709. Residues 746–763 (HPHSASLSSSSAKPLGTS) show a composition bias toward low complexity. Positions 853–878 (GQFQDQSWSSGSQKEEGTQPQVNGHQ) are enriched in polar residues. Basic residues predominate over residues 889–898 (SSRKRRKRKR). Positions 901-917 (GLSQEATPSQDLIQHSC) are enriched in polar residues. Residues 921–932 (DHSEPEARTELQ) are compositionally biased toward basic and acidic residues. Over residues 933 to 943 (KKKKKKRRKRK) the composition is skewed to basic residues. Over residues 944 to 960 (PEPQQDEESKHPGDQRS) the composition is skewed to basic and acidic residues.

The protein belongs to the peptidase C19 family. In terms of assembly, interacts with isoform 3 of FBXW7; the interaction inhibits MYC degradation induced by SCF(FBW7) complex. Interacts with NTRK1; USP36 does not deubiquitinate NTRK1. Interacts with NEDD4L (via domains WW1, 3 and 4); the interaction inhibits ubiquitination of, at least, NTRK1, KCNQ2 and KCNQ3 by NEDD4L. Interacts (via C-terminus) with EXOSC10 (via C-terminus); the interaction is facilitated by the association with RNA and promotes sumoylation of EXOSC10. Polyubiquitinated by NEDD4L, no effect on USP36 protein levels. Both proteins interact with and regulate each other's ubiquitination levels.

The protein resides in the nucleus. It is found in the nucleolus. Its subcellular location is the cytoplasm. It carries out the reaction Thiol-dependent hydrolysis of ester, thioester, amide, peptide and isopeptide bonds formed by the C-terminal Gly of ubiquitin (a 76-residue protein attached to proteins as an intracellular targeting signal).. In terms of biological role, deubiquitinase essential for the regulation of nucleolar structure and function. Required for cell and organism viability. Plays an important role in ribosomal RNA processing and protein synthesis, which is mediated, at least in part, through deubiquitination of DHX33, NPM1 and FBL, regulating their protein stability. Functions as a transcriptional repressor by deubiquiting histone H2B at the promoters of genes critical for cellular differentiation, such as CDKN1A, thereby preventing histone H3 'Lys-4' trimethylation (H3K4). Specifically deubiquitinates MYC in the nucleolus, leading to prevent MYC degradation by the proteasome: acts by specifically interacting with isoform 3 of FBXW7 (FBW7gamma) in the nucleolus and counteracting ubiquitination of MYC by the SCF(FBW7) complex. In contrast, it does not interact with isoform 1 of FBXW7 (FBW7alpha) in the nucleoplasm. Interacts to and regulates the actions of E3 ubiquitin-protein ligase NEDD4L over substrates such as NTRK1, KCNQ2 and KCNQ3, affecting their expression an functions. Deubiquitinates SOD2, regulates SOD2 protein stability. Deubiquitinase activity is required to control selective autophagy activation by ubiquitinated proteins. Promotes CEP63 stabilization through 'Lys-48'-linked deubiquitination leading to increased stability. Acts as a SUMO ligase to promote EXOSC10 sumoylation critical for the nucleolar RNA exosome function in rRNA processing. Binds to pre-rRNAs. The chain is Ubiquitin carboxyl-terminal hydrolase 36 (Usp36) from Mus musculus (Mouse).